The sequence spans 223 residues: Sigma non-opioid intracellular receptor 1 (223 aa).

The Lumenal portion of the chain corresponds to 1-9; it reads MPWAVGRRW. Residues 2-8 are targeting to endoplasmic reticulum-associated lipid droplets; that stretch reads PWAVGRR. Residues 10-30 traverse the membrane as a helical segment; that stretch reads AWITLFLTIVAVLIQAVWLWL. Residues 31–223 lie on the Cytoplasmic side of the membrane; the sequence is GTQSFVFQRE…LTTYLFGQDP (193 aa). Residues 99–106 form an important for ligand-binding region; it reads SLSEYVLL. The interval 177 to 223 is C-terminal hydrophobic region; that stretch reads VIPSTLAFALSDTIFSTQDFLTLFYTLRAYARGLRLELTTYLFGQDP.

Belongs to the ERG2 family. Homotrimer. Interacts with KCNA2; cocaine consumption leads to increased interaction. Forms a ternary complex with ANK2 and ITPR3. The complex is disrupted by agonists. Interacts with KCNA4. Interacts with RNF112 in an oxidative stress-regulated manner. Expressed in ependymocytes and neurons throughout the CNS from the olfactory bulb to the spinal cord. Expressed by progenitor, mature and satellite oligodendrocytes and by Schwann cells (at protein level). Expressed in liver, intestine, kidney, brain, lung and heart. Expressed by retinal cells.

The protein resides in the nucleus inner membrane. It is found in the nucleus outer membrane. The protein localises to the nucleus envelope. It localises to the cytoplasmic vesicle. Its subcellular location is the endoplasmic reticulum membrane. The protein resides in the membrane. It is found in the lipid droplet. The protein localises to the cell junction. It localises to the cell membrane. Its subcellular location is the cell projection. The protein resides in the growth cone. It is found in the postsynaptic density membrane. Functionally, functions in lipid transport from the endoplasmic reticulum and is involved in a wide array of cellular functions probably through regulation of the biogenesis of lipid microdomains at the plasma membrane. Involved in the regulation of different receptors it plays a role in BDNF signaling and EGF signaling. Also regulates ion channels like the potassium channel and could modulate neurotransmitter release. Plays a role in calcium signaling through modulation together with ANK2 of the ITP3R-dependent calcium efflux at the endoplasmic reticulum. Plays a role in several other cell functions including proliferation, survival and death. Originally identified for its ability to bind various psychoactive drugs it is involved in learning processes, memory and mood alteration. Necessary for proper mitochondrial axonal transport in motor neurons, in particular the retrograde movement of mitochondria. Plays a role in protecting cells against oxidative stress-induced cell death via its interaction with RNF112. The sequence is that of Sigma non-opioid intracellular receptor 1 (Sigmar1) from Rattus norvegicus (Rat).